Here is a 169-residue protein sequence, read N- to C-terminus: ATP synthase subunit b (169 aa).

A helical membrane pass occupies residues 13 to 33 (LFLFQLINFLIIVFILKKFLF).

It belongs to the ATPase B chain family. In terms of assembly, F-type ATPases have 2 components, F(1) - the catalytic core - and F(0) - the membrane proton channel. F(1) has five subunits: alpha(3), beta(3), gamma(1), delta(1), epsilon(1). F(0) has three main subunits: a(1), b(2) and c(10-14). The alpha and beta chains form an alternating ring which encloses part of the gamma chain. F(1) is attached to F(0) by a central stalk formed by the gamma and epsilon chains, while a peripheral stalk is formed by the delta and b chains.

The protein localises to the cell inner membrane. In terms of biological role, f(1)F(0) ATP synthase produces ATP from ADP in the presence of a proton or sodium gradient. F-type ATPases consist of two structural domains, F(1) containing the extramembraneous catalytic core and F(0) containing the membrane proton channel, linked together by a central stalk and a peripheral stalk. During catalysis, ATP synthesis in the catalytic domain of F(1) is coupled via a rotary mechanism of the central stalk subunits to proton translocation. Its function is as follows. Component of the F(0) channel, it forms part of the peripheral stalk, linking F(1) to F(0). In Endomicrobium trichonymphae, this protein is ATP synthase subunit b.